A 173-amino-acid chain; its full sequence is Shikimate kinase 2 (173 aa).

12-17 (GCGKTT) contributes to the ATP binding site. Mg(2+)-binding residues include Thr16 and Asp32. 3 residues coordinate substrate: Asp34, Arg58, and Gly79. An LID domain region spans residues 112–126 (QASPQAHQRPTLTGR). Arg120 is an ATP binding site. Arg139 lines the substrate pocket. Gln155 contacts ATP.

In terms of assembly, monomer. The cofactor is Mg(2+).

It is found in the cytoplasm. It catalyses the reaction shikimate + ATP = 3-phosphoshikimate + ADP + H(+). It functions in the pathway metabolic intermediate biosynthesis; chorismate biosynthesis; chorismate from D-erythrose 4-phosphate and phosphoenolpyruvate: step 5/7. Inhibited by chloride and sulfate ions. In terms of biological role, catalyzes the specific phosphorylation of the 3-hydroxyl group of shikimic acid using ATP as a cosubstrate. This Dickeya chrysanthemi (Pectobacterium chrysanthemi) protein is Shikimate kinase 2 (aroL).